The sequence spans 379 residues: MSAGNGTPWGSAVGEEAWAGSGVAVEGSELPTFSTAAKVRVGVTIVLFVSSAGGNLAVLWSVTRPQPSQLRPSPVRTLFAHLAAADLLVTFVVMPLDATWNITVQWLAGDIACRTLMFLKLMAMYSAAFLPVVIGLDRQAAVLNPLGSRSGVRKLLGAAWGLSFLLALPQLFLFHTVHRAGPVPFTQCVTKGSFKARWQETTYNLFTFCCLFLLPLIAMAICYSRIVLSVSSPQTRKGSHAPAGEFALRRSFDNRPRVCLRALRLALLILLTFILCWTPYYLLGLWYWFSPTMLTEVPPSLSHILFLFGLLNAPLDPLLYGAFTFGCRRGHQELSIDSSKEGSGRMLQQEIHALRQQEVQKTVTSRSAGETKGISITSI.

The Extracellular portion of the chain corresponds to 1-40 (MSAGNGTPWGSAVGEEAWAGSGVAVEGSELPTFSTAAKVR). A helical membrane pass occupies residues 41–60 (VGVTIVLFVSSAGGNLAVLW). At 61–76 (SVTRPQPSQLRPSPVR) the chain is on the cytoplasmic side. Residues 77-96 (TLFAHLAAADLLVTFVVMPL) form a helical membrane-spanning segment. Residues 97–114 (DATWNITVQWLAGDIACR) are Extracellular-facing. N-linked (GlcNAc...) asparagine glycosylation occurs at asparagine 101. The cysteines at positions 113 and 188 are disulfide-linked. The helical transmembrane segment at 115 to 136 (TLMFLKLMAMYSAAFLPVVIGL) threads the bilayer. The Cytoplasmic portion of the chain corresponds to 137 to 160 (DRQAAVLNPLGSRSGVRKLLGAAW). A helical membrane pass occupies residues 161 to 178 (GLSFLLALPQLFLFHTVH). Residues 179 to 204 (RAGPVPFTQCVTKGSFKARWQETTYN) lie on the Extracellular side of the membrane. The helical transmembrane segment at 205–224 (LFTFCCLFLLPLIAMAICYS) threads the bilayer. Residues 225–278 (RIVLSVSSPQTRKGSHAPAGEFALRRSFDNRPRVCLRALRLALLILLTFILCWT) are Cytoplasmic-facing. Residues 279 to 297 (PYYLLGLWYWFSPTMLTEV) traverse the membrane as a helical segment. The Extracellular segment spans residues 298-303 (PPSLSH). The chain crosses the membrane as a helical span at residues 304–323 (ILFLFGLLNAPLDPLLYGAF). Residues 324–379 (TFGCRRGHQELSIDSSKEGSGRMLQQEIHALRQQEVQKTVTSRSAGETKGISITSI) lie on the Cytoplasmic side of the membrane.

Belongs to the G-protein coupled receptor 1 family. Post-translationally, phosphorylated on the C-terminal cytoplasmic tail.

It localises to the cell membrane. Receptor for gonadotropin releasing hormone II (GnRH II). This receptor mediates its action by association with G proteins that activate a phosphatidylinositol-calcium second messenger system. The sequence is that of Gonadotropin-releasing hormone II receptor (GNRHR2) from Chlorocebus aethiops (Green monkey).